Here is a 581-residue protein sequence, read N- to C-terminus: Intermediate filament protein ifa-2 (581 aa).

Disordered stretches follow at residues 1–35 and 47–68; these read MTDP…GSGN and SSVS…RDNR. The head stretch occupies residues 1 to 74; that stretch reads MTDPDSYRSS…RDNREREKKE (74 aa). Positions 7-28 are enriched in polar residues; it reads YRSSITSRPSFNRTVTSSSQNY. Residues 71–424 enclose the IF rod domain; the sequence is EKKEIMELND…QMLEGNSEGN (354 aa). The tract at residues 75 to 106 is coil 1A; the sequence is IMELNDRLASYIEKVRFLDAQNRKLDADLKML. Residues 107-120 form a linker 1 region; the sequence is QGRFGKSTGSVKVM. Residues 121–258 are coil 1B; it reads YEMEITTATN…RGFETELKEL (138 aa). The tract at residues 259-276 is linker 12; the sequence is QAQAARDTTSENREYFKN. Residues 277–424 form a coil 2 region; the sequence is ELANAMRDIR…QMLEGNSEGN (148 aa). The tail stretch occupies residues 425-578; sequence GLRQLVEKVV…THIQRQSQQT (154 aa). Residues 449-469 form a disordered region; it reads RVVKGEHSSRTSYQRSAKGNV. An LTD domain is found at 457–574; that stretch reads SRTSYQRSAK…EERATHIQRQ (118 aa).

It belongs to the intermediate filament family. In terms of assembly, forms some heteromeric filaments with ifb-1. In terms of tissue distribution, mainly expressed in regions of the hypodermis adjacent to muscle. Expressed in longitudinal stripes where the mechanosensory neurons interface with the hypodermis. Also expressed to the uterine seam and within the uterine-vulval cells.

The protein localises to the cell junction. It is found in the hemidesmosome. Functionally, cytoplasmic intermediate filaments provide mechanical strength to cells. Essential protein, involved in attachment structures in epidermal cells that connect muscles to the external cuticle. Probably acts by forming hypodermal hemidesmosome complexes that help mediate muscle-cuticle force transduction. Although expressed during embryogenesis, it is not required for embryonic development of muscle-cuticle linkages nor for the localization of other proteins to the hemidesmosomes in embryos. The chain is Intermediate filament protein ifa-2 from Caenorhabditis elegans.